Reading from the N-terminus, the 74-residue chain is Cytochrome c oxidase assembly factor 5 (74 aa).

The CHCH domain occupies 27-65; sequence QSDCVLKEGKSPRQCLKEGNCKALKYSFFECKRSMLDAR. A Cx10C motif motif is present at residues 30–41; that stretch reads CVLKEGKSPRQC. Cystine bridges form between Cys-30-Cys-57 and Cys-41-Cys-47. At Ser-37 the chain carries Phosphoserine. The Cx9C motif signature appears at 47–57; the sequence is CKALKYSFFEC.

This sequence belongs to the PET191 family.

Involved in an early step of the mitochondrial complex IV assembly process. In Bos taurus (Bovine), this protein is Cytochrome c oxidase assembly factor 5 (COA5).